Consider the following 285-residue polypeptide: MKGATNLFKSMRKPTNVGNFRQFSVNQVNSDNKRSEPGKKTHFGFTDVDEAEKEQKVHHVFANVAKKYDLMNDAMSMGVHRLWKDYYVGGLQVPYNAKCLDMAGGTGDIAFRILRHSPTAKVTVSDINQPMLDVGKKRAEKERDIQPSRAEWVCANAEQMPFESNTYDLFTMSFGIRNCTHPEKVVREAFRVLKPGGQLAILEFSEVNSALKPIYDAYSFNVIPVLGEILASDRASYQYLVESIRKFPNQDEFARIIREEGFSNVRYENLTFGVCSIHKGMKPRK.

The N-terminal 30 residues, 1-30, are a transit peptide targeting the mitochondrion; it reads MKGATNLFKSMRKPTNVGNFRQFSVNQVNS. Residues Thr106, Asp126, 156–157, and Ser173 each bind S-adenosyl-L-methionine; that span reads NA.

It belongs to the class I-like SAM-binding methyltransferase superfamily. MenG/UbiE family. As to quaternary structure, component of a multi-subunit COQ enzyme complex.

It is found in the mitochondrion inner membrane. The enzyme catalyses a 2-methoxy-6-(all-trans-polyprenyl)benzene-1,4-diol + S-adenosyl-L-methionine = a 5-methoxy-2-methyl-3-(all-trans-polyprenyl)benzene-1,4-diol + S-adenosyl-L-homocysteine + H(+). The protein operates within cofactor biosynthesis; ubiquinone biosynthesis. In terms of biological role, methyltransferase required for the conversion of 2-polyprenyl-6-methoxy-1,4-benzoquinol (DDMQH2) to 2-polyprenyl-3-methyl-6-methoxy-1,4-benzoquinol (DMQH2). In Caenorhabditis elegans, this protein is 2-methoxy-6-polyprenyl-1,4-benzoquinol methylase, mitochondrial.